The sequence spans 396 residues: RNA polymerase principal sigma factor HrdA (396 aa).

The span at 1–20 (MRGGQRRASRLRPPTYRRRP) shows a compositional bias: basic residues. Residues 1–96 (MRGGQRRASR…PTRTESGGPS (96 aa)) form a disordered region. 2 stretches are compositionally biased toward low complexity: residues 33 to 42 (QTQTLTQTDT) and 56 to 75 (LLAM…PGAP). The short motif at 187–200 (DLVQEGNLGLIRAV) is the Polymerase core binding element. Residues 357-376 (LEEIGRLFGVTRERIRQIES) constitute a DNA-binding region (H-T-H motif).

It belongs to the sigma-70 factor family. In terms of assembly, interacts transiently with the RNA polymerase catalytic core. Interacts with RNA polymerase-binding protein RbpA.

Sigma factors are initiation factors that promote the attachment of RNA polymerase to specific initiation sites and are then released. In Streptomyces coelicolor (strain ATCC BAA-471 / A3(2) / M145), this protein is RNA polymerase principal sigma factor HrdA (hrdA).